Reading from the N-terminus, the 787-residue chain is Zinc finger protein 227 (787 aa).

The 72-residue stretch at 23–94 folds into the KRAB domain; sequence VTFKDVAVVF…ERETQRNGHS (72 aa). 18 consecutive C2H2-type zinc fingers follow at residues 243 to 275, 312 to 334, 340 to 362, 368 to 390, 396 to 418, 424 to 446, 452 to 474, 480 to 502, 508 to 530, 536 to 558, 564 to 586, 592 to 614, 620 to 642, 648 to 670, 676 to 698, 704 to 726, 732 to 754, and 760 to 782; these read HPCR…LQTH, YRCD…YRTH, YRCE…QRVH, YKCE…QRVH, YKCD…RRVH, YRCE…FRVH, YTCK…QNVH, FKCE…QRVH, YRCD…QVIH, YTCE…QRVH, YKCG…QRVH, YKCD…QRGH, HKCE…LSVH, and YKCN…QKVH.

Belongs to the krueppel C2H2-type zinc-finger protein family.

Its subcellular location is the nucleus. Functionally, may be involved in transcriptional regulation. The chain is Zinc finger protein 227 (ZNF227) from Bos taurus (Bovine).